The chain runs to 135 residues: Fluoride-specific ion channel FluC 1 (135 aa).

A run of 4 helical transmembrane segments spans residues 7–27 (LAVG…GLVL), 32–52 (GFPY…PFLM), 65–85 (LALA…SFSV), and 96–116 (WSAF…LSLL). Residues G75 and T78 each coordinate Na(+).

It belongs to the fluoride channel Fluc/FEX (TC 1.A.43) family.

The protein localises to the cell membrane. The catalysed reaction is fluoride(in) = fluoride(out). Its activity is regulated as follows. Na(+) is not transported, but it plays an essential structural role and its presence is essential for fluoride channel function. Its function is as follows. Fluoride-specific ion channel. Important for reducing fluoride concentration in the cell, thus reducing its toxicity. The sequence is that of Fluoride-specific ion channel FluC 1 from Latilactobacillus sakei subsp. sakei (strain 23K) (Lactobacillus sakei subsp. sakei).